A 378-amino-acid polypeptide reads, in one-letter code: Leukocyte elastase inhibitor (378 aa).

Residue methionine 1 is modified to N-acetylmethionine. Position 137 is an N6-acetyllysine (lysine 137). Serine 299 is subject to Phosphoserine. The CARD-binding motif (CBM) stretch occupies residues 350–378 (DFIADHPFIFFIRHNPSSNILFLGRLSSP).

The protein belongs to the serpin family. Ov-serpin subfamily. In terms of assembly, monomer. Interacts (via C-terminus) with CASP1; CASP4 (via CARD domain) and CASP5; these interactions regulate the activity of inflammatory caspases. Interacts with PRTN3. Interacts with GZMH.

It localises to the secreted. It is found in the cytoplasm. The protein localises to the cytolytic granule. Its subcellular location is the early endosome. In terms of biological role, neutrophil serine protease inhibitor that plays an essential role in the regulation of the innate immune response, inflammation and cellular homeostasis. Acts primarily to protect the cell from proteases released in the cytoplasm during stress or infection. These proteases are important in killing microbes but when released from granules, these potent enzymes also destroy host proteins and contribute to mortality. Regulates the activity of the neutrophil proteases elastase, cathepsin G, proteinase-3, chymase, chymotrypsin, and kallikrein-3. Also acts as a potent intracellular inhibitor of GZMH by directly blocking its proteolytic activity. During inflammation, limits the activity of inflammatory caspases CASP1, CASP4 and CASP5 by suppressing their caspase-recruitment domain (CARD) oligomerization and enzymatic activation. When secreted, promotes the proliferation of beta-cells via its protease inhibitory function. Functionally, may be cleaved leading to a loss of its anti-protease activity and to the appearance of an endonuclease activity. However no catalytic site was identified. This Sus scrofa (Pig) protein is Leukocyte elastase inhibitor (SERPINB1).